A 197-amino-acid polypeptide reads, in one-letter code: Imidazoleglycerol-phosphate dehydratase (197 aa).

Belongs to the imidazoleglycerol-phosphate dehydratase family.

It is found in the cytoplasm. It catalyses the reaction D-erythro-1-(imidazol-4-yl)glycerol 3-phosphate = 3-(imidazol-4-yl)-2-oxopropyl phosphate + H2O. It participates in amino-acid biosynthesis; L-histidine biosynthesis; L-histidine from 5-phospho-alpha-D-ribose 1-diphosphate: step 6/9. This is Imidazoleglycerol-phosphate dehydratase from Xanthobacter autotrophicus (strain ATCC BAA-1158 / Py2).